We begin with the raw amino-acid sequence, 239 residues long: Tetrahydromethanopterin S-methyltransferase subunit A (239 aa).

Over methionine 1–serine 215 the chain is Cytoplasmic. Histidine 85 contacts 5-hydroxybenzimidazolylcob(I)amide. Residues glycine 216–leucine 238 traverse the membrane as a helical segment. A topological domain (extracellular) is located at residue leucine 239.

It belongs to the MtrA family. As to quaternary structure, the complex is composed of 8 subunits; MtrA, MtrB, MtrC, MtrD, MtrE, MtrF, MtrG and MtrH. 5-hydroxybenzimidazolylcob(I)amide serves as cofactor.

It localises to the cell membrane. The enzyme catalyses 5-methyl-5,6,7,8-tetrahydromethanopterin + coenzyme M + 2 Na(+)(in) = 5,6,7,8-tetrahydromethanopterin + methyl-coenzyme M + 2 Na(+)(out). It functions in the pathway one-carbon metabolism; methanogenesis from CO(2); methyl-coenzyme M from 5,10-methylene-5,6,7,8-tetrahydromethanopterin: step 2/2. Functionally, part of a complex that catalyzes the formation of methyl-coenzyme M and tetrahydromethanopterin from coenzyme M and methyl-tetrahydromethanopterin. This is an energy-conserving, sodium-ion translocating step. The chain is Tetrahydromethanopterin S-methyltransferase subunit A from Methanococcus maripaludis (strain C7 / ATCC BAA-1331).